The primary structure comprises 186 residues: Akirin-1A (186 aa).

A disordered region spans residues 14 to 65 (EALMSPQSPKRRRCAPLPGSPATPSPQRCAIRPEMQQGQQQPLSQLGGDRRL). Over residues 49-60 (QQGQQQPLSQLG) the composition is skewed to low complexity. An SYVS motif motif is present at residues 183 to 186 (SYVS).

It belongs to the akirin family.

The protein resides in the nucleus. Molecular adapter that acts as a bridge between proteins, and which is involved skeletal muscle development. Functions as a signal transducer for MSTN during skeletal muscle regeneration and myogenesis. The polypeptide is Akirin-1A (akirin1-a) (Xenopus laevis (African clawed frog)).